We begin with the raw amino-acid sequence, 384 residues long: Interstitial collagenase (384 aa).

Positions 1–25 (MLSGLWSSILALLGVFLQSVGEFRA) are cleaved as a signal peptide. The propeptide at 26 to 88 (ETQEQDVEIV…STCGVPDVGE (63 aa)) is activation peptide. The Cysteine switch signature appears at 79-86 (STCGVPDV). A Zn(2+)-binding site is contributed by C81. Residues D113 and D129 each coordinate Ca(2+). Residues H139 and D141 each coordinate Zn(2+). Ca(2+)-binding residues include D146, G147, G149, and N151. Residue H154 coordinates Zn(2+). Residues G161, G163, and D165 each coordinate Ca(2+). H167 serves as a coordination point for Zn(2+). Ca(2+) contacts are provided by D169, E170, and E172. Residue H189 participates in Zn(2+) binding. E190 is an active-site residue. H193 and H199 together coordinate Zn(2+). Residues 218 to 239 (LSQDDIDGPSGNPVQPRGPQTP) form a disordered region. Cysteines 242 and 381 form a disulfide. Residues D249, Q277, and D347 each contribute to the Ca(2+) site. Hemopexin repeat units lie at residues 273–319 (ELGL…FGFP) and 333–381 (KQSM…WFNC).

Belongs to the peptidase M10A family. Requires Ca(2+) as cofactor. The cofactor is Zn(2+).

It is found in the secreted. Its subcellular location is the extracellular space. The protein resides in the extracellular matrix. It carries out the reaction Cleavage of the triple helix of collagen at about three-quarters of the length of the molecule from the N-terminus, at 775-Gly-|-Ile-776 in the alpha1(I) chain. Cleaves synthetic substrates and alpha-macroglobulins at bonds where P1' is a hydrophobic residue.. Its activity is regulated as follows. Can be activated without removal of the activation peptide. Cleaves collagens of types I, II, and III at one site in the helical domain. Also cleaves collagens of types VII and X. This is Interstitial collagenase from Aquarana catesbeiana (American bullfrog).